A 601-amino-acid polypeptide reads, in one-letter code: NADH-quinone oxidoreductase subunit C/D (601 aa).

Residues 1–191 (MKLTRDFPHN…DPFMLDAAKQ (191 aa)) form an NADH dehydrogenase I subunit C region. The segment at 215–601 (DYMFLNLGPN…IDFVMSDVDR (387 aa)) is NADH dehydrogenase I subunit D.

The protein in the N-terminal section; belongs to the complex I 30 kDa subunit family. It in the C-terminal section; belongs to the complex I 49 kDa subunit family. NDH-1 is composed of 13 different subunits. Subunits NuoB, CD, E, F, and G constitute the peripheral sector of the complex.

Its subcellular location is the cell inner membrane. It catalyses the reaction a quinone + NADH + 5 H(+)(in) = a quinol + NAD(+) + 4 H(+)(out). NDH-1 shuttles electrons from NADH, via FMN and iron-sulfur (Fe-S) centers, to quinones in the respiratory chain. The immediate electron acceptor for the enzyme in this species is believed to be ubiquinone. Couples the redox reaction to proton translocation (for every two electrons transferred, four hydrogen ions are translocated across the cytoplasmic membrane), and thus conserves the redox energy in a proton gradient. The chain is NADH-quinone oxidoreductase subunit C/D from Shewanella oneidensis (strain ATCC 700550 / JCM 31522 / CIP 106686 / LMG 19005 / NCIMB 14063 / MR-1).